Consider the following 603-residue polypeptide: Deuterosome assembly protein 1 (603 aa).

Coiled coils occupy residues 14–59 (CEAE…NAQT), 85–197 (MTQN…GKKQ), 227–278 (IEKL…ELQS), 336–399 (QDQP…KQLK), and 454–480 (HTSINKLEYENERLRNDLAKLRVNGKS). Ser546 carries the post-translational modification Phosphoserine. A coiled-coil region spans residues 557–600 (AAQHFLLEEEKRAKELEKLLNTHIDELQRHTEFTLNKYSKLKQN).

It belongs to the CEP63 family. As to quaternary structure, interacts with CEP152; the interaction is mutually exclusive with CEP63.

The protein resides in the cytoplasm. Functionally, key structural component of the deuterosome, a structure that promotes de novo centriole amplification in multiciliated cells. Deuterosome-mediated centriole amplification occurs in terminally differentiated multiciliated cells and can generate more than 100 centrioles. Probably sufficient for the specification and formation of the deuterosome inner core. Interacts with CEP152 and recruits PLK4 to activate centriole biogenesis. This is Deuterosome assembly protein 1 from Macaca fascicularis (Crab-eating macaque).